A 317-amino-acid chain; its full sequence is Melanocyte-stimulating hormone receptor (317 aa).

Residues 1–28 form a disordered region; that stretch reads MPMQGAQGRLRGSLNATPPTTPHSGLAG. Residues 1-37 are Extracellular-facing; that stretch reads MPMQGAQGRLRGSLNATPPTTPHSGLAGNQTGPWCLE. The N-linked (GlcNAc...) asparagine glycan is linked to N29. Residues 38–63 traverse the membrane as a helical segment; sequence VSIPDELFLSLGLVSLVENMLVVAAI. Residues 64–72 are Cytoplasmic-facing; the sequence is AKNRNLHSP. Residues 73 to 93 form a helical membrane-spanning segment; sequence MYYFICCLAVSDLLVSVSNVL. Residues 94–118 are Extracellular-facing; it reads ETAVMLLLEAGVLAAWAGVVQQLDN. The helical transmembrane segment at 119–140 threads the bilayer; sequence AIDVFICGSMVSSLCFLGAIAV. Topologically, residues 141 to 163 are cytoplasmic; the sequence is DRYITIFYALRYHSIVTLPRARW. The chain crosses the membrane as a helical span at residues 164–183; sequence AIATIWAASVVCSTLFIAYY. The Extracellular portion of the chain corresponds to 184 to 191; the sequence is DCTAVLLC. Residues 192 to 211 form a helical membrane-spanning segment; that stretch reads LVSFFLALVVLMAVLYMHML. The Cytoplasmic segment spans residues 212 to 240; the sequence is ARACLHARSIARLHKRWRPVHQGLGLKGA. The chain crosses the membrane as a helical span at residues 241-266; it reads ATLSILLGSFFLCWGPFFLHLTLIVL. Residues 267-279 are Extracellular-facing; that stretch reads CPQHPTCSCVFKN. A helical membrane pass occupies residues 280-300; it reads FKLFLTLIICNSIVDPLIYAF. Over 301–317 the chain is Cytoplasmic; that stretch reads RSQELRKTLKEVLLCSW. C315 is lipidated: S-palmitoyl cysteine.

Belongs to the G-protein coupled receptor 1 family. In terms of assembly, interacts with MGRN1, but does not undergo MGRN1-mediated ubiquitination; this interaction competes with GNAS-binding and thus inhibits agonist-induced cAMP production. Interacts with OPN3; the interaction results in a decrease in MC1R-mediated cAMP signaling and ultimately a decrease in melanin production in melanocytes.

It localises to the cell membrane. Functionally, receptor for MSH (alpha, beta and gamma) and ACTH. The activity of this receptor is mediated by G proteins which activate adenylate cyclase. Mediates melanogenesis, the production of eumelanin (black/brown) and phaeomelanin (red/yellow), via regulation of cAMP signaling in melanocytes. In Mammuthus primigenius (Siberian woolly mammoth), this protein is Melanocyte-stimulating hormone receptor (MC1R).